The primary structure comprises 82 residues: Large ribosomal subunit protein uL23 (82 aa).

Belongs to the universal ribosomal protein uL23 family. In terms of assembly, part of the 50S ribosomal subunit. Contacts protein L29.

In terms of biological role, binds to 23S rRNA. One of the proteins that surrounds the polypeptide exit tunnel on the outside of the ribosome. In Methanococcoides burtonii (strain DSM 6242 / NBRC 107633 / OCM 468 / ACE-M), this protein is Large ribosomal subunit protein uL23.